A 261-amino-acid polypeptide reads, in one-letter code: Cytochrome c oxidase subunit 3 (261 aa).

Residues 1–15 are Mitochondrial matrix-facing; that stretch reads MTHQTHAYHMVNPSP. Residues 16-34 traverse the membrane as a helical segment; the sequence is WPLTGALSALLMTSGLTMW. The Mitochondrial intermembrane segment spans residues 35 to 40; sequence FHYNST. Residues 41 to 66 form a helical membrane-spanning segment; the sequence is ILLMLGLTTNMLTMYQWWRDIIREST. The Mitochondrial matrix segment spans residues 67 to 72; it reads FQGHHT. Residues 73–105 form a helical membrane-spanning segment; the sequence is PTVQKGLRYGMILFIISEVLFFTGFFWAFYHSS. Residues 106 to 128 lie on the Mitochondrial intermembrane side of the membrane; sequence LAPTPELGGCWPPTGIHPLNPLE. The helical transmembrane segment at 129–152 threads the bilayer; sequence VPLLNTSVLLASGVSITWAHHSLM. The Mitochondrial matrix portion of the chain corresponds to 153 to 155; the sequence is EGD. A helical transmembrane segment spans residues 156-183; the sequence is RNHMLQALFITIALGIYFTLLQASEYYE. Residues 184-190 are Mitochondrial intermembrane-facing; it reads APFTISD. The helical transmembrane segment at 191-223 threads the bilayer; the sequence is GVYGSTFFVATGFHGLHVIIGSTFLIVCFFRQL. Residues 224-232 are Mitochondrial matrix-facing; that stretch reads KFHFTSSHH. A helical transmembrane segment spans residues 233–256; that stretch reads FGFEAAAWYWHFVDVVWLFLYVSI. At 257 to 261 the chain is on the mitochondrial intermembrane side; that stretch reads YWWGS.

This sequence belongs to the cytochrome c oxidase subunit 3 family. As to quaternary structure, component of the cytochrome c oxidase (complex IV, CIV), a multisubunit enzyme composed of 14 subunits. The complex is composed of a catalytic core of 3 subunits MT-CO1, MT-CO2 and MT-CO3, encoded in the mitochondrial DNA, and 11 supernumerary subunits COX4I, COX5A, COX5B, COX6A, COX6B, COX6C, COX7A, COX7B, COX7C, COX8 and NDUFA4, which are encoded in the nuclear genome. The complex exists as a monomer or a dimer and forms supercomplexes (SCs) in the inner mitochondrial membrane with NADH-ubiquinone oxidoreductase (complex I, CI) and ubiquinol-cytochrome c oxidoreductase (cytochrome b-c1 complex, complex III, CIII), resulting in different assemblies (supercomplex SCI(1)III(2)IV(1) and megacomplex MCI(2)III(2)IV(2)).

Its subcellular location is the mitochondrion inner membrane. The enzyme catalyses 4 Fe(II)-[cytochrome c] + O2 + 8 H(+)(in) = 4 Fe(III)-[cytochrome c] + 2 H2O + 4 H(+)(out). Its function is as follows. Component of the cytochrome c oxidase, the last enzyme in the mitochondrial electron transport chain which drives oxidative phosphorylation. The respiratory chain contains 3 multisubunit complexes succinate dehydrogenase (complex II, CII), ubiquinol-cytochrome c oxidoreductase (cytochrome b-c1 complex, complex III, CIII) and cytochrome c oxidase (complex IV, CIV), that cooperate to transfer electrons derived from NADH and succinate to molecular oxygen, creating an electrochemical gradient over the inner membrane that drives transmembrane transport and the ATP synthase. Cytochrome c oxidase is the component of the respiratory chain that catalyzes the reduction of oxygen to water. Electrons originating from reduced cytochrome c in the intermembrane space (IMS) are transferred via the dinuclear copper A center (CU(A)) of subunit 2 and heme A of subunit 1 to the active site in subunit 1, a binuclear center (BNC) formed by heme A3 and copper B (CU(B)). The BNC reduces molecular oxygen to 2 water molecules using 4 electrons from cytochrome c in the IMS and 4 protons from the mitochondrial matrix. The protein is Cytochrome c oxidase subunit 3 (MT-CO3) of Tragelaphus imberbis (Lesser kudu).